A 121-amino-acid chain; its full sequence is Protein p14.5 (121 aa).

Ala2 carries the N-acetylalanine; by host modification. The tract at residues 84-121 is disordered; the sequence is SLVPDEADNKPEDDEESGGAKPKKKKHLFPKLSSHKSK. The segment covering 104-121 has biased composition (basic residues); that stretch reads KPKKKKHLFPKLSSHKSK.

It belongs to the asfivirus structural protein p14.5 family. Interacts with the major capsid protein. Interacts with host IRF3; this interaction interferes with the recruitment of IRF3 to TBK1. In terms of processing, acetylated.

It is found in the virion. Its function is as follows. Structural protein required for transport of intracellular particles from the assembly sites to the plasma membrane. Binds to both ssDNA and dsDNA. Suppressed the activation of the cGAS/STING pathway by interfering with the recruitment of IRF3 to TBK1, which in turn suppresses IRF3 phosphorylation, decreasing interferon production. This is Protein p14.5 from African swine fever virus (isolate Pig/Kenya/KEN-50/1950) (ASFV).